Here is a 407-residue protein sequence, read N- to C-terminus: Eukaryotic initiation factor 4A-II (407 aa).

Residues 1–23 (MSGGSADYSRDHGGPEGMEPDGV) are disordered. A Q motif motif is present at residues 33–61 (DNFDDMNLKESLLRGIYAYGFEKPSAIQQ). A Helicase ATP-binding domain is found at 64 to 235 (IIPCIKGYDV…KKFMREPIRI (172 aa)). Residue 77–84 (AQSGTGKT) coordinates ATP. Positions 183-186 (DEAD) match the DEAD box motif. The Helicase C-terminal domain occupies 246-407 (GIKQFYINVE…EMPMNVADLI (162 aa)).

The protein belongs to the DEAD box helicase family. eIF4A subfamily. In terms of assembly, eIF4F is a multi-subunit complex, the composition of which varies with external and internal environmental conditions. It is composed of at least EIF4A, EIF4E and EIF4G1/EIFFG3. Interacts with EIF4E.

It catalyses the reaction ATP + H2O = ADP + phosphate + H(+). Its function is as follows. ATP-dependent RNA helicase which is a subunit of the eIF4F complex involved in cap recognition and is required for mRNA binding to ribosome. In the current model of translation initiation, eIF4A unwinds RNA secondary structures in the 5'-UTR of mRNAs which is necessary to allow efficient binding of the small ribosomal subunit, and subsequent scanning for the initiator codon. The sequence is that of Eukaryotic initiation factor 4A-II (EIF4A2) from Gallus gallus (Chicken).